We begin with the raw amino-acid sequence, 227 residues long: Cytochrome c oxidase subunit 2 (227 aa).

The Mitochondrial intermembrane segment spans residues Met-1 to Ser-14. The chain crosses the membrane as a helical span at residues Pro-15–Thr-45. Topologically, residues Leu-46–Gln-59 are mitochondrial matrix. Residues Glu-60 to Thr-87 form a helical membrane-spanning segment. The Mitochondrial intermembrane segment spans residues Asp-88–Leu-227. Cu cation is bound by residues His-161, Cys-196, Glu-198, Cys-200, His-204, and Met-207. Mg(2+) is bound at residue Glu-198.

This sequence belongs to the cytochrome c oxidase subunit 2 family. In terms of assembly, component of the cytochrome c oxidase (complex IV, CIV), a multisubunit enzyme composed of 14 subunits. The complex is composed of a catalytic core of 3 subunits MT-CO1, MT-CO2 and MT-CO3, encoded in the mitochondrial DNA, and 11 supernumerary subunits COX4I, COX5A, COX5B, COX6A, COX6B, COX6C, COX7A, COX7B, COX7C, COX8 and NDUFA4, which are encoded in the nuclear genome. The complex exists as a monomer or a dimer and forms supercomplexes (SCs) in the inner mitochondrial membrane with NADH-ubiquinone oxidoreductase (complex I, CI) and ubiquinol-cytochrome c oxidoreductase (cytochrome b-c1 complex, complex III, CIII), resulting in different assemblies (supercomplex SCI(1)III(2)IV(1) and megacomplex MCI(2)III(2)IV(2)). Found in a complex with TMEM177, COA6, COX18, COX20, SCO1 and SCO2. Interacts with TMEM177 in a COX20-dependent manner. Interacts with COX20. Interacts with COX16. It depends on Cu cation as a cofactor.

It localises to the mitochondrion inner membrane. It carries out the reaction 4 Fe(II)-[cytochrome c] + O2 + 8 H(+)(in) = 4 Fe(III)-[cytochrome c] + 2 H2O + 4 H(+)(out). In terms of biological role, component of the cytochrome c oxidase, the last enzyme in the mitochondrial electron transport chain which drives oxidative phosphorylation. The respiratory chain contains 3 multisubunit complexes succinate dehydrogenase (complex II, CII), ubiquinol-cytochrome c oxidoreductase (cytochrome b-c1 complex, complex III, CIII) and cytochrome c oxidase (complex IV, CIV), that cooperate to transfer electrons derived from NADH and succinate to molecular oxygen, creating an electrochemical gradient over the inner membrane that drives transmembrane transport and the ATP synthase. Cytochrome c oxidase is the component of the respiratory chain that catalyzes the reduction of oxygen to water. Electrons originating from reduced cytochrome c in the intermembrane space (IMS) are transferred via the dinuclear copper A center (CU(A)) of subunit 2 and heme A of subunit 1 to the active site in subunit 1, a binuclear center (BNC) formed by heme A3 and copper B (CU(B)). The BNC reduces molecular oxygen to 2 water molecules using 4 electrons from cytochrome c in the IMS and 4 protons from the mitochondrial matrix. The sequence is that of Cytochrome c oxidase subunit 2 (MT-CO2) from Macaca mulatta (Rhesus macaque).